The following is a 160-amino-acid chain: H/ACA ribonucleoprotein complex subunit 2 (160 aa).

S15 is subject to Phosphoserine. At T23 the chain carries Phosphothreonine.

Belongs to the eukaryotic ribosomal protein eL8 family. As to quaternary structure, component of the box H/ACA small nucleolar ribonucleoprotein (H/ACA snoRNP) complex consisting of Nop60B, Gar1, NPH2 and Nop10, and associated with H/ACA-type snoRNAs.

The protein resides in the nucleus. It localises to the nucleolus. Component of the box H/ACA small nucleolar ribonucleoprotein (H/ACA snoRNP) complex, which catalyzes pseudouridylation of rRNA. This involves the isomerization of uridine such that the ribose is subsequently attached to C5, instead of the normal N1. Pseudouridine ('psi') residues may serve to stabilize the conformation of rRNAs. Required for ribosome biogenesis. H/ACA snoRNP complex-dependent ribosome biogenesis is important in female germline cell differentiation during oogenesis. The protein is H/ACA ribonucleoprotein complex subunit 2 of Drosophila melanogaster (Fruit fly).